The following is a 227-amino-acid chain: Cytochrome c oxidase subunit 2 (227 aa).

The Mitochondrial intermembrane segment spans residues 1–14; it reads MAYPFQLGFQDATS. The chain crosses the membrane as a helical span at residues 15–45; the sequence is PIMEELLHFHDHTLMIVFLISSLVLYIITLM. At 46-59 the chain is on the mitochondrial matrix side; that stretch reads LTTKLTHTSTMDAQ. Residues 60-87 form a helical membrane-spanning segment; it reads EVETVWTILPAIILILIALPSLRILYMM. Residues 88–227 lie on the Mitochondrial intermembrane side of the membrane; it reads DEVNNPSLTV…IFEKWSASML (140 aa). Residues histidine 161, cysteine 196, glutamate 198, cysteine 200, histidine 204, and methionine 207 each coordinate Cu cation. Glutamate 198 is a binding site for Mg(2+).

The protein belongs to the cytochrome c oxidase subunit 2 family. As to quaternary structure, component of the cytochrome c oxidase (complex IV, CIV), a multisubunit enzyme composed of 14 subunits. The complex is composed of a catalytic core of 3 subunits MT-CO1, MT-CO2 and MT-CO3, encoded in the mitochondrial DNA, and 11 supernumerary subunits COX4I, COX5A, COX5B, COX6A, COX6B, COX6C, COX7A, COX7B, COX7C, COX8 and NDUFA4, which are encoded in the nuclear genome. The complex exists as a monomer or a dimer and forms supercomplexes (SCs) in the inner mitochondrial membrane with NADH-ubiquinone oxidoreductase (complex I, CI) and ubiquinol-cytochrome c oxidoreductase (cytochrome b-c1 complex, complex III, CIII), resulting in different assemblies (supercomplex SCI(1)III(2)IV(1) and megacomplex MCI(2)III(2)IV(2)). Found in a complex with TMEM177, COA6, COX18, COX20, SCO1 and SCO2. Interacts with TMEM177 in a COX20-dependent manner. Interacts with COX20. Interacts with COX16. Cu cation is required as a cofactor.

Its subcellular location is the mitochondrion inner membrane. The enzyme catalyses 4 Fe(II)-[cytochrome c] + O2 + 8 H(+)(in) = 4 Fe(III)-[cytochrome c] + 2 H2O + 4 H(+)(out). Functionally, component of the cytochrome c oxidase, the last enzyme in the mitochondrial electron transport chain which drives oxidative phosphorylation. The respiratory chain contains 3 multisubunit complexes succinate dehydrogenase (complex II, CII), ubiquinol-cytochrome c oxidoreductase (cytochrome b-c1 complex, complex III, CIII) and cytochrome c oxidase (complex IV, CIV), that cooperate to transfer electrons derived from NADH and succinate to molecular oxygen, creating an electrochemical gradient over the inner membrane that drives transmembrane transport and the ATP synthase. Cytochrome c oxidase is the component of the respiratory chain that catalyzes the reduction of oxygen to water. Electrons originating from reduced cytochrome c in the intermembrane space (IMS) are transferred via the dinuclear copper A center (CU(A)) of subunit 2 and heme A of subunit 1 to the active site in subunit 1, a binuclear center (BNC) formed by heme A3 and copper B (CU(B)). The BNC reduces molecular oxygen to 2 water molecules using 4 electrons from cytochrome c in the IMS and 4 protons from the mitochondrial matrix. This Balaenoptera borealis (Sei whale) protein is Cytochrome c oxidase subunit 2 (MT-CO2).